Consider the following 76-residue polypeptide: Serine proteinase inhibitor IA-2 (76 aa).

Ser-1 carries the post-translational modification N-acetylserine.

The protein belongs to the protease inhibitor I9 family.

In terms of biological role, specifically inhibits an intracellular serine proteinase (proteinase A). The protein is Serine proteinase inhibitor IA-2 of Pleurotus ostreatus (Oyster mushroom).